A 754-amino-acid chain; its full sequence is Probable TonB-dependent siderophore receptor PirA (754 aa).

Residues 1–24 (MSKRIIQSVLSVSVLASMMSMAFA) form the signal peptide. The TBDR plug domain maps to 54-181 (EQVKQSLGVS…AGGVVNIITK (128 aa)). Residues 186–754 (ETHGSVEFYT…AYYASLKYSF (569 aa)) enclose the TBDR beta-barrel domain. Residues 404–414 (VSTTQGKDSSG) show a composition bias toward polar residues. The disordered stretch occupies residues 404–424 (VSTTQGKDSSGSGYGDQLAKG). C511 and C519 are oxidised to a cystine. Positions 737-754 (QTYNEPGRAYYASLKYSF) match the TonB C-terminal box motif.

Belongs to the TonB-dependent receptor family.

Its subcellular location is the cell outer membrane. Probably involved in the initial step of iron uptake by binding iron chelating siderophores, thereby allowing extraction of iron from the environment. May bind the siderophore, ferric enterobactin, with micromolar affinity. The protein is Probable TonB-dependent siderophore receptor PirA of Acinetobacter baumannii (strain ATCC 19606 / DSM 30007 / JCM 6841 / CCUG 19606 / CIP 70.34 / NBRC 109757 / NCIMB 12457 / NCTC 12156 / 81).